The primary structure comprises 241 residues: Large ribosomal subunit protein uL30 (241 aa).

Positions 1 to 32 (MATTLKPETLQKKEKAQQKTAEERAAAKKVRK) are disordered. Basic and acidic residues predominate over residues 9–26 (TLQKKEKAQQKTAEERAA).

It belongs to the universal ribosomal protein uL30 family. In terms of assembly, component of the large ribosomal subunit. Mature ribosomes consist of a small (40S) and a large (60S) subunit. The 40S subunit contains about 32 different proteins and 1 molecule of RNA (18S). The 60S subunit contains 45 different proteins and 3 molecules of RNA (25S, 5.8S and 5S).

It is found in the cytoplasm. Component of the ribosome, a large ribonucleoprotein complex responsible for the synthesis of proteins in the cell. The small ribosomal subunit (SSU) binds messenger RNAs (mRNAs) and translates the encoded message by selecting cognate aminoacyl-transfer RNA (tRNA) molecules. The large subunit (LSU) contains the ribosomal catalytic site termed the peptidyl transferase center (PTC), which catalyzes the formation of peptide bonds, thereby polymerizing the amino acids delivered by tRNAs into a polypeptide chain. The nascent polypeptides leave the ribosome through a tunnel in the LSU and interact with protein factors that function in enzymatic processing, targeting, and the membrane insertion of nascent chains at the exit of the ribosomal tunnel. This Candida albicans (strain SC5314 / ATCC MYA-2876) (Yeast) protein is Large ribosomal subunit protein uL30.